The sequence spans 35 residues: Cupiennin-1c (35 aa).

Glutamic acid 1-amide is present on Glu35.

In terms of tissue distribution, expressed by the venom gland.

The protein resides in the secreted. Has antimicrobial activity against E.coli, E.faecalis, P.aeruginosa, and S.aureus. The chain is Cupiennin-1c from Cupiennius salei (American wandering spider).